The following is a 357-amino-acid chain: Ketoreductase CTB6 (357 aa).

Y172 provides a ligand contact to NADP(+).

Belongs to the NAD(P)-dependent epimerase/dehydratase family. Dihydroflavonol-4-reductase subfamily.

The protein operates within mycotoxin biosynthesis. Its function is as follows. Ketoreductase; part of the gene cluster that mediates the biosynthesis of cercosporin, a light-activated, non-host-selective toxin. The perylenequinone chromophore of cercosporin absorbs light energy to attain an electronically-activated triplet state and produces active oxygen species such as the hydroxyl radical, superoxide, hydrogen peroxide or singlet oxygen upon reaction with oxygen molecules. These reactive oxygen species cause damage to various cellular components including lipids, proteins and nucleic acids. The first step of cercosporin biosynthesis is performed by the polyketide synthase CTB1 which catalyzes the formation of nor-toralactone. The starter unit acyltransferase (SAT) domain of CTB1 initiates polyketide extension by the selective utilization of acetyl-CoA, which is elongated to the heptaketide in the beta-ketoacyl synthase (KS) domain by successive condensations with six malonyl units introduced by the malonyl acyltransferase (MAT) domain. The product template (PT) domain catalyzes C4-C9 and C2-C11 aldol cyclizations and dehydrations to a trihydroxynaphthalene, which is thought to be delivered to the thioesterase (TE) domain for product release. The bifunctional enzyme CTB3 then methylates nor-toralactone to toralactone before conducting an unusual oxidative aromatic ring opening. The O-methyltransferase CTB2 further methylates the nascent OH-6 of the CBT3 product, blocking further oxidation at this site before the reductase CTB6 reduces the 2-oxopropyl ketone at position C7, giving naphthalene. The FAD-dependent monooxygenase CTB5 in concert with the multicopper oxidase CTB12 are responsible for homodimerization of naphthalene with CTB7 installing the dioxepine moiety, finally producing cercosporin. The fasciclin domain-containing protein CTB11 might act with CTB5 and CTB12 whereas the roles of CTB9 and CTB10 have still to be elucidated. This is Ketoreductase CTB6 from Cercospora beticola (Sugarbeet leaf spot fungus).